Consider the following 439-residue polypeptide: Xylose isomerase (439 aa).

Catalysis depends on residues His-101 and Asp-104. Mg(2+)-binding residues include Glu-232, Glu-268, His-271, Asp-296, Asp-307, Asp-309, and Asp-339.

It belongs to the xylose isomerase family. In terms of assembly, homotetramer. Requires Mg(2+) as cofactor.

It localises to the cytoplasm. It catalyses the reaction alpha-D-xylose = alpha-D-xylulofuranose. In Haemophilus influenzae (strain 86-028NP), this protein is Xylose isomerase.